The sequence spans 248 residues: tRNA1(Val) (adenine(37)-N6)-methyltransferase (248 aa).

This sequence belongs to the methyltransferase superfamily. tRNA (adenine-N(6)-)-methyltransferase family.

The protein localises to the cytoplasm. It carries out the reaction adenosine(37) in tRNA1(Val) + S-adenosyl-L-methionine = N(6)-methyladenosine(37) in tRNA1(Val) + S-adenosyl-L-homocysteine + H(+). In terms of biological role, specifically methylates the adenine in position 37 of tRNA(1)(Val) (anticodon cmo5UAC). The polypeptide is tRNA1(Val) (adenine(37)-N6)-methyltransferase (Pectobacterium carotovorum subsp. carotovorum (strain PC1)).